A 307-amino-acid chain; its full sequence is Ornithine carbamoyltransferase (307 aa).

Carbamoyl phosphate is bound by residues 50–53, Gln77, Arg101, and 128–131; these read STRT and HPCQ. L-ornithine is bound by residues Asn160, Asp224, and 228 to 229; that span reads SM. Carbamoyl phosphate contacts are provided by residues 264–265 and Arg292; that span reads CL.

Belongs to the aspartate/ornithine carbamoyltransferase superfamily. OTCase family.

The protein localises to the cytoplasm. The catalysed reaction is carbamoyl phosphate + L-ornithine = L-citrulline + phosphate + H(+). It participates in amino-acid biosynthesis; L-arginine biosynthesis; L-arginine from L-ornithine and carbamoyl phosphate: step 1/3. Functionally, reversibly catalyzes the transfer of the carbamoyl group from carbamoyl phosphate (CP) to the N(epsilon) atom of ornithine (ORN) to produce L-citrulline. This Mycolicibacterium gilvum (strain PYR-GCK) (Mycobacterium gilvum (strain PYR-GCK)) protein is Ornithine carbamoyltransferase.